Here is a 346-residue protein sequence, read N- to C-terminus: tRNA(Ile)-lysidine synthase (346 aa).

32–37 lines the ATP pocket; it reads SGGPDS.

Belongs to the tRNA(Ile)-lysidine synthase family.

It localises to the cytoplasm. It catalyses the reaction cytidine(34) in tRNA(Ile2) + L-lysine + ATP = lysidine(34) in tRNA(Ile2) + AMP + diphosphate + H(+). Ligates lysine onto the cytidine present at position 34 of the AUA codon-specific tRNA(Ile) that contains the anticodon CAU, in an ATP-dependent manner. Cytidine is converted to lysidine, thus changing the amino acid specificity of the tRNA from methionine to isoleucine. The polypeptide is tRNA(Ile)-lysidine synthase (Rhodopseudomonas palustris (strain ATCC BAA-98 / CGA009)).